The chain runs to 1972 residues: Myosin-11 (1972 aa).

Serine 8, serine 23, and serine 40 each carry phosphoserine. In terms of domain architecture, Myosin N-terminal SH3-like spans 31–81; that stretch reads AAKRLVWVPSEKQGFEAASIKEEKGDEVVVELVENGKKVTVGKDDIQKMNP. One can recognise a Myosin motor domain in the interval 85-783; that stretch reads SKVEDMAELT…VLAHLEEERD (699 aa). The residue at position 129 (lysine 129) is an N6,N6,N6-trimethyllysine. An ATP-binding site is contributed by 178 to 185; it reads GESGAGKT. Actin-binding stretches follow at residues 661-683 and 762-776; these read LGKLMTTLRNTTPNFVRCIIPNH and RIGQSKIFFRTGVLA. An IQ domain is found at 786-815; it reads ITDVIMAFQAMCRGYLARKAFAKRQQQLTA. The stretch at 844 to 1934 forms a coiled coil; that stretch reads LLQVTRQEEE…KSKLRRGNET (1091 aa). A disordered region spans residues 858–882; sequence EDELQKTKERQQKAENELKELEQKH. The residue at position 1177 (threonine 1177) is a Phosphothreonine. Residues serine 1684 and serine 1722 each carry the phosphoserine modification. Disordered regions lie at residues 1744–1800 and 1866–1972; these read ELEE…LRSK and EQYK…KASE. Residues 1762-1788 show a composition bias toward polar residues; it reads ATQQAEQLSNELATERSTAQKNESARQ. Composition is skewed to basic and acidic residues over residues 1789–1800 and 1866–1876; these read QLERQNKELRSK and EQYKEQAEKGN. The segment at 1935–1972 is C-terminal; sequence SFVPSRRSGGRRVIENADGSEEETDTRDADFNGTKASE. Serine 1954 bears the Phosphoserine mark. A Phosphothreonine modification is found at threonine 1958. Serine 1971 is modified (phosphoserine).

This sequence belongs to the TRAFAC class myosin-kinesin ATPase superfamily. Myosin family. In terms of assembly, muscle myosin is a hexameric protein that consists of 2 heavy chain subunits (MHC), 2 alkali light chain subunits (MLC) and 2 regulatory light chain subunits (MLC-2). Smooth muscle; expressed in the umbilical artery, bladder, esophagus and trachea. Isoform 1 is mostly found in slowly contracting tonic muscles.

Its subcellular location is the melanosome. In terms of biological role, muscle contraction. In Homo sapiens (Human), this protein is Myosin-11 (MYH11).